The primary structure comprises 178 residues: Anthranilate synthase component 2 (178 aa).

Residues 1-178 (MIVVVDCKDS…RNFVEMCHDG (178 aa)) enclose the Glutamine amidotransferase type-1 domain. 49 to 51 (GPG) provides a ligand contact to L-glutamine. The active-site Nucleophile; for GATase activity is the C71. L-glutamine is bound by residues Q75 and 120 to 121 (SL). Residues H155 and E157 each act as for GATase activity in the active site.

As to quaternary structure, heterotetramer consisting of two non-identical subunits: a beta subunit (TrpG) and a large alpha subunit (TrpE).

It catalyses the reaction chorismate + L-glutamine = anthranilate + pyruvate + L-glutamate + H(+). Its pathway is amino-acid biosynthesis; L-tryptophan biosynthesis; L-tryptophan from chorismate: step 1/5. Its function is as follows. Part of a heterotetrameric complex that catalyzes the two-step biosynthesis of anthranilate, an intermediate in the biosynthesis of L-tryptophan. In the first step, the glutamine-binding beta subunit (TrpG) of anthranilate synthase (AS) provides the glutamine amidotransferase activity which generates ammonia as a substrate that, along with chorismate, is used in the second step, catalyzed by the large alpha subunit of AS (TrpE) to produce anthranilate. In the absence of TrpG, TrpE can synthesize anthranilate directly from chorismate and high concentrations of ammonia. The polypeptide is Anthranilate synthase component 2 (trpG) (Archaeoglobus fulgidus (strain ATCC 49558 / DSM 4304 / JCM 9628 / NBRC 100126 / VC-16)).